We begin with the raw amino-acid sequence, 2701 residues long: Centromere-associated protein E (2701 aa).

The 324-residue stretch at 6 to 329 folds into the Kinesin motor domain; the sequence is AVAVCVRVRP…LQFASTAKYM (324 aa). 86-93 is an ATP binding site; the sequence is GQTASGKT. Residues 336–2590 adopt a coiled-coil conformation; it reads NEVSTDEALL…SNEVKTWKER (2255 aa). Phosphoserine is present on residues serine 611 and serine 2083. The kinetochore-binding domain stretch occupies residues 2126 to 2476; the sequence is KEIEFQKELS…IDLEKMKNAK (351 aa). Residues 2355–2376 are disordered; the sequence is SGAQVNPTTQDNKNPHVTSRAT. Serine 2389 is modified (phosphoserine). A compositionally biased stretch (polar residues) spans 2508–2527; it reads QAQDTSVISEHTDPQPSNKP. 2 disordered regions span residues 2508 to 2533 and 2588 to 2701; these read QAQD…CGGG and KERT…CKTQ. Positions 2510-2698 are globular autoinhibitory domain; that stretch reads QDTSVISEHT…ASSGKDVPEC (189 aa). Over residues 2588-2600 the composition is skewed to basic and acidic residues; the sequence is KERTLKREAHKQV. The span at 2601 to 2625 shows a compositional bias: polar residues; the sequence is TCENSPKSPKVTGTASKKKQITPSQ. The segment covering 2626–2640 has biased composition (basic and acidic residues); it reads CKERNLQDPVPKESP. Serine 2639, serine 2647, and serine 2651 each carry phosphoserine. At cysteine 2698 the chain carries Cysteine methyl ester. A lipid anchor (S-farnesyl cysteine) is attached at cysteine 2698. The propeptide at 2699-2701 is removed in mature form; the sequence is KTQ.

The protein belongs to the TRAFAC class myosin-kinesin ATPase superfamily. Kinesin family. As to quaternary structure, monomer. Interacts with CENPF. Interacts with BUB1B. Interacts with SEPT7. Interacts with KIF18A. Interacts with PRC1. Interacts with NUF2; this interaction determines kinetochore localization. Interacts with SKAP; this interaction greatly favors SKAP binding to microtubules. Interacts with TRAPPC12. Interacts with CTCF. In terms of processing, the C-terminal inhibitory domain is phosphorylated. Phosphorylation relieves autoinhibition of the kinetochore motor. Post-translationally, sumoylated with SUMO2 and SUMO3. The sumoylation mediates the association to the kinetochore.

Its subcellular location is the chromosome. The protein localises to the centromere. It localises to the kinetochore. It is found in the cytoplasm. The protein resides in the cytoskeleton. Its subcellular location is the spindle. Functionally, microtubule plus-end-directed kinetochore motor which plays an important role in chromosome congression, microtubule-kinetochore conjugation and spindle assembly checkpoint activation. Drives chromosome congression (alignment of chromosomes at the spindle equator resulting in the formation of the metaphase plate) by mediating the lateral sliding of polar chromosomes along spindle microtubules towards the spindle equator and by aiding the establishment and maintenance of connections between kinetochores and spindle microtubules. The transport of pole-proximal chromosomes towards the spindle equator is favored by microtubule tracks that are detyrosinated. Acts as a processive bi-directional tracker of dynamic microtubule tips; after chromosomes have congressed, continues to play an active role at kinetochores, enhancing their links with dynamic microtubule ends. Suppresses chromosome congression in NDC80-depleted cells and contributes positively to congression only when microtubules are stabilized. Plays an important role in the formation of stable attachments between kinetochores and spindle microtubules The stabilization of kinetochore-microtubule attachment also requires CENPE-dependent localization of other proteins to the kinetochore including BUB1B, MAD1 and MAD2. Plays a role in spindle assembly checkpoint activation (SAC) via its interaction with BUB1B resulting in the activation of its kinase activity, which is important for activating SAC. Necessary for the mitotic checkpoint signal at individual kinetochores to prevent aneuploidy due to single chromosome loss. The sequence is that of Centromere-associated protein E (CENPE) from Homo sapiens (Human).